The chain runs to 282 residues: MFYLIYKEKGISSFKAIKDFAWQNNIKKIGHSGTLDPEATGLLLLASDEDTKLLDYVDKKFKSYRATMILGLQSQSFDSQGKIINSSNLKVDNLTIEKTIKNFVGPFVQIPPIFSAKKINGKRAYEYARQGSEISMKAQEVFVKSIEIEKIDFPKVIFKAKVSRGTYIRSLINQIGLELKTYALMDDLERIELSGLSKNDLGVVSDLDIIDLEVLSLEKHEILTLAKGQKFSKDLADGKYAFIYKNTKKILGICKIESKIIAPIKIFNKKIEKSLKKDEKNE.

Asp36 acts as the Nucleophile in catalysis.

It belongs to the pseudouridine synthase TruB family. Type 1 subfamily.

It catalyses the reaction uridine(55) in tRNA = pseudouridine(55) in tRNA. Its function is as follows. Responsible for synthesis of pseudouridine from uracil-55 in the psi GC loop of transfer RNAs. The sequence is that of tRNA pseudouridine synthase B from Mycoplasmopsis pulmonis (strain UAB CTIP) (Mycoplasma pulmonis).